We begin with the raw amino-acid sequence, 248 residues long: Adenosylcobinamide-GDP ribazoletransferase (248 aa).

6 consecutive transmembrane segments (helical) span residues 36–56, 59–79, 114–134, 137–157, 170–190, and 199–219; these read FFLPVVAFIIGGMEFLIYLAL, FLPPNVIIVLLILFTAMITGG, GTIALIIDLLLKYQLLYSLVL, YSIAIVLAPIIGRISILFLCL, IFIGNMSKPIIFFITTIVLAL, and ATIIPFIGVLLITYLLYLLCL.

Belongs to the CobS family. Mg(2+) is required as a cofactor.

It localises to the cell membrane. The enzyme catalyses alpha-ribazole + adenosylcob(III)inamide-GDP = adenosylcob(III)alamin + GMP + H(+). The catalysed reaction is alpha-ribazole 5'-phosphate + adenosylcob(III)inamide-GDP = adenosylcob(III)alamin 5'-phosphate + GMP + H(+). The protein operates within cofactor biosynthesis; adenosylcobalamin biosynthesis; adenosylcobalamin from cob(II)yrinate a,c-diamide: step 7/7. In terms of biological role, joins adenosylcobinamide-GDP and alpha-ribazole to generate adenosylcobalamin (Ado-cobalamin). Also synthesizes adenosylcobalamin 5'-phosphate from adenosylcobinamide-GDP and alpha-ribazole 5'-phosphate. This is Adenosylcobinamide-GDP ribazoletransferase from Clostridium botulinum (strain Okra / Type B1).